A 375-amino-acid polypeptide reads, in one-letter code: 23S rRNA (uracil(747)-C(5))-methyltransferase RlmC (375 aa).

Positions 3, 11, 14, and 87 each coordinate [4Fe-4S] cluster. S-adenosyl-L-methionine contacts are provided by Gln-212, Phe-241, Glu-262, and Asn-307. The Nucleophile role is filled by Cys-334.

The protein belongs to the class I-like SAM-binding methyltransferase superfamily. RNA M5U methyltransferase family. RlmC subfamily.

It catalyses the reaction uridine(747) in 23S rRNA + S-adenosyl-L-methionine = 5-methyluridine(747) in 23S rRNA + S-adenosyl-L-homocysteine + H(+). Its function is as follows. Catalyzes the formation of 5-methyl-uridine at position 747 (m5U747) in 23S rRNA. The sequence is that of 23S rRNA (uracil(747)-C(5))-methyltransferase RlmC from Salmonella agona (strain SL483).